Reading from the N-terminus, the 258-residue chain is Homeobox-leucine zipper protein ATHB-7 (258 aa).

Positions 29–88 form a DNA-binding region, homeobox; that stretch reads NKNNQRRFSDEQIKSLEMMFESETRLEPRKKVQLARELGLQPRQVAIWFQNKRARWKSKQ. A leucine-zipper region spans residues 89 to 124; that stretch reads LETEYNILRQNYDNLASQFESLKKEKQALVSELQRL. A disordered region spans residues 149–183; it reads SSTHHESENEENRRRKPEEVRPEMEMKDDKGHHGV. Residues 151-183 are compositionally biased toward basic and acidic residues; that stretch reads THHESENEENRRRKPEEVRPEMEMKDDKGHHGV.

It belongs to the HD-ZIP homeobox family. Class I subfamily. In terms of assembly, interacts with TBP2 and TFIIB1. In terms of tissue distribution, widely expressed.

The protein localises to the nucleus. Functionally, probable transcription activator that may act as growth regulators in response to water deficit. This Arabidopsis thaliana (Mouse-ear cress) protein is Homeobox-leucine zipper protein ATHB-7 (ATHB-7).